Reading from the N-terminus, the 269-residue chain is MTHLERSRHQLFPFHLVSPSPWPITVSFALMSFALSLGLTMHGYIVGNSVLFTSIILVLYSMTMWFRDIIAEGTYLGDHTLAVRKGLNYGFLLFVVSEILIFAGIFWAYFHSAMSPAIEIGGVWPPVGITAIGATELPLLNTIILLASGATITYSHHATIEGNRNHALNGLFITLWLIVIFVVCQYIEYTNAPFTISDGVYGSVFFAGTGLHFLHMGMLIIMLAVCYWRMRQYHFTTGHHVNYETTILYLHVLDVIWLFLYIVMYWWGA.

The next 7 helical transmembrane spans lie at 21 to 41 (PWPI…GLTM), 45 to 65 (IVGN…MTMW), 90 to 110 (GFLL…WAYF), 127 to 147 (VGIT…ILLA), 167 to 187 (ALNG…CQYI), 204 to 224 (VFFA…IMLA), and 247 to 267 (ILYL…MYWW).

The protein belongs to the cytochrome c oxidase subunit 3 family. As to quaternary structure, component of the cytochrome c oxidase (complex IV, CIV), a multisubunit enzyme composed of a catalytic core of 3 subunits and several supernumerary subunits. The complex exists as a monomer or a dimer and forms supercomplexes (SCs) in the inner mitochondrial membrane with ubiquinol-cytochrome c oxidoreductase (cytochrome b-c1 complex, complex III, CIII).

The protein localises to the mitochondrion inner membrane. The catalysed reaction is 4 Fe(II)-[cytochrome c] + O2 + 8 H(+)(in) = 4 Fe(III)-[cytochrome c] + 2 H2O + 4 H(+)(out). In terms of biological role, component of the cytochrome c oxidase, the last enzyme in the mitochondrial electron transport chain which drives oxidative phosphorylation. The respiratory chain contains 3 multisubunit complexes succinate dehydrogenase (complex II, CII), ubiquinol-cytochrome c oxidoreductase (cytochrome b-c1 complex, complex III, CIII) and cytochrome c oxidase (complex IV, CIV), that cooperate to transfer electrons derived from NADH and succinate to molecular oxygen, creating an electrochemical gradient over the inner membrane that drives transmembrane transport and the ATP synthase. Cytochrome c oxidase is the component of the respiratory chain that catalyzes the reduction of oxygen to water. Electrons originating from reduced cytochrome c in the intermembrane space (IMS) are transferred via the dinuclear copper A center (CU(A)) of subunit 2 and heme A of subunit 1 to the active site in subunit 1, a binuclear center (BNC) formed by heme A3 and copper B (CU(B)). The BNC reduces molecular oxygen to 2 water molecules using 4 electrons from cytochrome c in the IMS and 4 protons from the mitochondrial matrix. This chain is Cytochrome c oxidase subunit 3 (COX3), found in Wickerhamomyces canadensis (Yeast).